A 266-amino-acid polypeptide reads, in one-letter code: Apolipoprotein A-I (266 aa).

A signal peptide spans 1–18; it reads MKAVVLTLAVLFLTGSQA. 2 repeat units span residues 67–88 and 89–110. The tract at residues 67 to 266 is 10 X approximate tandem repeats; that stretch reads LKLLDNWDSL…DEATKKLNSQ (200 aa). Position 109 is a methionine sulfoxide (Met-109). The 3; half-length repeat unit spans residues 111–121; it reads KDLEEVKKKVQ. Repeat copies occupy residues 122-143, 144-165, 166-187, 188-209, and 210-231. The 9; half-length repeat unit spans residues 232–242; that stretch reads PALEDLRQGLL. Repeat unit 10 spans residues 243-266; sequence PVLENFRVSLLAAVDEATKKLNSQ.

It belongs to the apolipoprotein A1/A4/E family. As to quaternary structure, homodimer. Interacts with APOA1BP and CLU. Component of a sperm activating protein complex (SPAP), consisting of APOA1, an immunoglobulin heavy chain, an immunoglobulin light chain and albumin. Interacts with NDRG1. Interacts with SCGB3A2. Interacts with NAXE and YJEFN3. Post-translationally, glycosylated. In terms of processing, palmitoylated. Phosphorylation sites are present in the extracellular medium.

Its subcellular location is the secreted. Its function is as follows. Participates in the reverse transport of cholesterol from tissues to the liver for excretion by promoting cholesterol efflux from tissues and by acting as a cofactor for the lecithin cholesterol acyltransferase (LCAT). As part of the SPAP complex, activates spermatozoa motility. In Mirounga angustirostris (Northern elephant seal), this protein is Apolipoprotein A-I (APOA1).